Here is a 452-residue protein sequence, read N- to C-terminus: Pup--protein ligase 1 (452 aa).

Glu9 contacts Mg(2+). ATP is bound at residue Arg53. Residue Tyr55 participates in Mg(2+) binding. Asp57 functions as the Proton acceptor in the catalytic mechanism. Glu63 is a binding site for Mg(2+). 2 residues coordinate ATP: Thr66 and Trp419.

The protein belongs to the Pup ligase/Pup deamidase family. Pup-conjugating enzyme subfamily.

The catalysed reaction is ATP + [prokaryotic ubiquitin-like protein]-L-glutamate + [protein]-L-lysine = ADP + phosphate + N(6)-([prokaryotic ubiquitin-like protein]-gamma-L-glutamyl)-[protein]-L-lysine.. It functions in the pathway protein degradation; proteasomal Pup-dependent pathway. It participates in protein modification; protein pupylation. Catalyzes the covalent attachment of the prokaryotic ubiquitin-like protein modifier Pup to the proteasomal substrate proteins, thereby targeting them for proteasomal degradation. This tagging system is termed pupylation. The ligation reaction involves the side-chain carboxylate of the C-terminal glutamate of Pup and the side-chain amino group of a substrate lysine. In Rhodococcus erythropolis (Arthrobacter picolinophilus), this protein is Pup--protein ligase 1.